We begin with the raw amino-acid sequence, 398 residues long: 2-epi-5-epi-valiolone synthase (398 aa).

Residues D62, 93–96 (ETVK), 126–130 (GVLMD), 150–151 (TT), K163, K172, and 190–193 (FLAT) each bind NAD(+). The active site involves K163. Positions 205, 276, and 292 each coordinate a divalent metal cation.

Belongs to the sugar phosphate cyclases superfamily. EEVS family. NAD(+) is required as a cofactor. The cofactor is Co(2+).

It catalyses the reaction D-sedoheptulose 7-phosphate = 2-epi-5-epi-valiolone + phosphate. Catalyzes the cyclization of D-sedoheptulose 7-phosphate to 2-epi-5-epi-valiolone. Does not use ido-heptulose 7-phosphate and 3-deoxy-arabino-heptulosonate 7-phosphate. Involved in the biosynthesis of the acarviose moiety of the alpha-glucosidase inhibitor acarbose. This Actinoplanes sp. (strain ATCC 31044 / CBS 674.73 / SE50/110) protein is 2-epi-5-epi-valiolone synthase.